A 155-amino-acid chain; its full sequence is Fibroblast growth factor 1 (155 aa).

Alanine 2 is modified (N-acetylalanine). The Nuclear localization signal signature appears at 24–27 (KKPK). Residues 24-28 (KKPKL) and 113-116 (ISKK) contribute to the heparin site.

This sequence belongs to the heparin-binding growth factors family. As to quaternary structure, monomer. Homodimer. Interacts with FGFR1, FGFR2, FGFR3 and FGFR4. Affinity between fibroblast growth factors (FGFs) and their receptors is increased by heparan sulfate glycosaminoglycans that function as coreceptors. Found in a complex with FGFBP1, FGF1 and FGF2. Interacts with FGFBP1. Part of a Cu(2+)-dependent multiprotein aggregate containing FGF1, S100A13 and SYT1. Interacts with S100A13. Interacts with FGFBP1. Interacts with LRRC59. Interacts with CSNKA, CSNKB and FIBP. While binding with LRRC59, CSNKA and FIBP seem mutually exclusive, CSNKB and FIBP may cooperatively interact with FGF1. Interacts with SYT1. Forms a ternary complex with FGFR1 and ITGAV:ITGB3 and induces the recruitment of PTPN11 to the complex. In terms of processing, in the nucleus, phosphorylated by PKC/PRKCD.

The protein resides in the secreted. Its subcellular location is the cytoplasm. It localises to the cell cortex. It is found in the cytosol. The protein localises to the nucleus. Its function is as follows. Plays an important role in the regulation of cell survival, cell division, angiogenesis, cell differentiation and cell migration. Functions as a potent mitogen in vitro. Acts as a ligand for FGFR1 and integrins. Binds to FGFR1 in the presence of heparin leading to FGFR1 dimerization and activation via sequential autophosphorylation on tyrosine residues which act as docking sites for interacting proteins, leading to the activation of several signaling cascades. Binds to integrin ITGAV:ITGB3. Its binding to integrin, subsequent ternary complex formation with integrin and FGFR1, and the recruitment of PTPN11 to the complex are essential for FGF1 signaling. Induces the phosphorylation and activation of FGFR1, FRS2, MAPK3/ERK1, MAPK1/ERK2 and AKT1. Can induce angiogenesis. This is Fibroblast growth factor 1 (FGF1) from Bos taurus (Bovine).